The sequence spans 336 residues: tRNA-cytidine(32) 2-sulfurtransferase (336 aa).

Positions Met1–Glu42 are disordered. The PP-loop motif signature appears at Ser75–Ser80. Residues Cys150, Cys153, and Cys241 each coordinate [4Fe-4S] cluster. The interval Pro301–Val328 is disordered. Residues Asp315–Val328 show a composition bias toward polar residues.

It belongs to the TtcA family. As to quaternary structure, homodimer. It depends on Mg(2+) as a cofactor. The cofactor is [4Fe-4S] cluster.

The protein localises to the cytoplasm. The enzyme catalyses cytidine(32) in tRNA + S-sulfanyl-L-cysteinyl-[cysteine desulfurase] + AH2 + ATP = 2-thiocytidine(32) in tRNA + L-cysteinyl-[cysteine desulfurase] + A + AMP + diphosphate + H(+). It functions in the pathway tRNA modification. Catalyzes the ATP-dependent 2-thiolation of cytidine in position 32 of tRNA, to form 2-thiocytidine (s(2)C32). The sulfur atoms are provided by the cysteine/cysteine desulfurase (IscS) system. The sequence is that of tRNA-cytidine(32) 2-sulfurtransferase from Paraburkholderia phymatum (strain DSM 17167 / CIP 108236 / LMG 21445 / STM815) (Burkholderia phymatum).